Reading from the N-terminus, the 196-residue chain is Aequorin-2 (196 aa).

Residues 1–7 (MTSKQYS) constitute a propeptide that is removed on maturation. EF-hand domains are found at residues 18-53 (RWIG…IVIN), 54-108 (NLGA…AKNE), 117-146 (DALF…AGII), and 147-182 (QSSE…FWYT). The Ca(2+) site is built by aspartate 31, asparagine 33, asparagine 35, lysine 37, and glutamate 42. May interact with the chromophore stretches follow at residues 47–57 (ASDIVINNLGA), 62–72 (AKRHKDAVEAF), and 107–117 (NEPTLIRIWGD). Ca(2+)-binding residues include aspartate 124, aspartate 126, asparagine 128, glutamate 135, aspartate 160, aspartate 162, serine 164, glutamine 166, and glutamate 171.

The protein belongs to the aequorin family. Post-translationally, the reduction of the disulfide bond is necessary to regenerate aequorin from apoaequorin.

Ca(2+)-dependent bioluminescence photoprotein. Displays an emission peak at 470 nm (blue light). Trace amounts of calcium ion trigger the intramolecular oxidation of the chromophore, coelenterazine into coelenteramide and CO(2) with the concomitant emission of light. This chain is Aequorin-2, found in Aequorea victoria (Water jellyfish).